The primary structure comprises 250 residues: Transmembrane protein 106C (250 aa).

The segment at 1–25 is disordered; sequence MGSQHSAAARPSSCRRKQEDDRDGL. Gly-2 carries N-myristoyl glycine lipidation. Basic and acidic residues predominate over residues 16-25; sequence RKQEDDRDGL. The helical transmembrane segment at 87 to 107 threads the bilayer; sequence YVLLSILLCLLASGLVVFFLF. Asn-173 and Asn-186 each carry an N-linked (GlcNAc...) asparagine glycan. The chain crosses the membrane as a helical span at residues 197 to 217; it reads FSYVYFFCTVPEILVHNIVIF.

The protein belongs to the TMEM106 family. As to quaternary structure, interacts with TMEM106B.

It is found in the endoplasmic reticulum membrane. Its subcellular location is the membrane. This chain is Transmembrane protein 106C (TMEM106C), found in Homo sapiens (Human).